The sequence spans 952 residues: RNA polymerase-associated protein RapA (952 aa).

Residues E164–D334 form the Helicase ATP-binding domain. Position 177–184 (D177–T184) interacts with ATP. The short motif at D280–H283 is the DEAH box element. The Helicase C-terminal domain maps to R492–I668.

It belongs to the SNF2/RAD54 helicase family. RapA subfamily. Interacts with the RNAP. Has a higher affinity for the core RNAP than for the holoenzyme. Its ATPase activity is stimulated by binding to RNAP.

Transcription regulator that activates transcription by stimulating RNA polymerase (RNAP) recycling in case of stress conditions such as supercoiled DNA or high salt concentrations. Probably acts by releasing the RNAP, when it is trapped or immobilized on tightly supercoiled DNA. Does not activate transcription on linear DNA. Probably not involved in DNA repair. The sequence is that of RNA polymerase-associated protein RapA from Aliivibrio fischeri (strain ATCC 700601 / ES114) (Vibrio fischeri).